The following is a 513-amino-acid chain: L-threonine dehydratase biosynthetic IlvA (513 aa).

K63 is modified (N6-(pyridoxal phosphate)lysine). Residues N90, 189-193 (GGGGL), and S316 each bind pyridoxal 5'-phosphate. ACT-like domains lie at 340–411 (ALLA…DMSD) and 433–504 (RLYT…DVTK).

It belongs to the serine/threonine dehydratase family. As to quaternary structure, homotetramer. Pyridoxal 5'-phosphate serves as cofactor.

The enzyme catalyses L-threonine = 2-oxobutanoate + NH4(+). The protein operates within amino-acid biosynthesis; L-isoleucine biosynthesis; 2-oxobutanoate from L-threonine: step 1/1. Functionally, catalyzes the anaerobic formation of alpha-ketobutyrate and ammonia from threonine in a two-step reaction. The first step involved a dehydration of threonine and a production of enamine intermediates (aminocrotonate), which tautomerizes to its imine form (iminobutyrate). Both intermediates are unstable and short-lived. The second step is the nonenzymatic hydrolysis of the enamine/imine intermediates to form 2-ketobutyrate and free ammonia. In the low water environment of the cell, the second step is accelerated by RidA. The polypeptide is L-threonine dehydratase biosynthetic IlvA (ilvA) (Haemophilus influenzae (strain ATCC 51907 / DSM 11121 / KW20 / Rd)).